Consider the following 80-residue polypeptide: Large ribosomal subunit protein uL24 (80 aa).

Belongs to the universal ribosomal protein uL24 family. As to quaternary structure, part of the 50S ribosomal subunit.

Its function is as follows. One of two assembly initiator proteins, it binds directly to the 5'-end of the 23S rRNA, where it nucleates assembly of the 50S subunit. One of the proteins that surrounds the polypeptide exit tunnel on the outside of the subunit. This Chlorobaculum tepidum (strain ATCC 49652 / DSM 12025 / NBRC 103806 / TLS) (Chlorobium tepidum) protein is Large ribosomal subunit protein uL24.